The sequence spans 508 residues: MHMSKSFLLISMGLASISVHAQTLTRDNGAPVGDNQNSITAGENGSVLLQDVHLIQKLQRFARERIPERVVHARGTGAHGEFVVSGDFSDLTLSSPFAQSGKVTPVFVRFSTVIHSKGSPETLRDPRGFATKFYTDQGNWDLVGNNLPVFFIRDSIKFPDMVHSLKPSPVTNLQDPNRFFDFFSSQPSATNMLTWVYTNLGTPASYRTMDGFGVHAYKWINRKGEVNYVKFHWKSQQGVKSLRPAEVTKVQGEDFNHLTNDLYTQINAGNFPKWDLYVKVLSPKALSKLDYNGLDATKVWLDVPEKKVGTMTLNRVPDNFFLETEQSAFAPSNIIPGIEPSEDRLLQGRLFAYADTQLYRLGANLFQLPVNSPKSPVANHNQDGPSNNSTGLGNVDSLDVNYEPSRLVNLTVDKQARAVETPLSGHVQQQAIRNPRDFFQAGVLYRSLSEQDKADLIHNLSGDLNKVNDAEVKAIMVSYFYRADKEYGTRLAKATDVNLKQVTKLASM.

A signal peptide spans 1–21; sequence MHMSKSFLLISMGLASISVHA. Catalysis depends on residues H72 and N145. Y353 contributes to the heme binding site. A compositionally biased stretch (polar residues) spans 373–392; that stretch reads PKSPVANHNQDGPSNNSTGL. Residues 373-396 form a disordered region; sequence PKSPVANHNQDGPSNNSTGLGNVD.

It belongs to the catalase family. It depends on heme as a cofactor.

The protein localises to the periplasm. The enzyme catalyses 2 H2O2 = O2 + 2 H2O. In terms of biological role, decomposes hydrogen peroxide into water and oxygen; serves to protect cells from the toxic effects of hydrogen peroxide. The sequence is that of Catalase from Vibrio vulnificus (strain CMCP6).